Reading from the N-terminus, the 217-residue chain is ATP-dependent Clp protease proteolytic subunit 3 (217 aa).

Residues 1–13 show a composition bias toward low complexity; it reads MSPFTAGPAPART. Positions 1 to 23 are disordered; the sequence is MSPFTAGPAPARTPRAEEGDTPA. Catalysis depends on Ser-108, which acts as the Nucleophile. His-133 is an active-site residue.

The protein belongs to the peptidase S14 family. Fourteen ClpP subunits assemble into 2 heptameric rings which stack back to back to give a disk-like structure with a central cavity, resembling the structure of eukaryotic proteasomes.

It localises to the cytoplasm. It catalyses the reaction Hydrolysis of proteins to small peptides in the presence of ATP and magnesium. alpha-casein is the usual test substrate. In the absence of ATP, only oligopeptides shorter than five residues are hydrolyzed (such as succinyl-Leu-Tyr-|-NHMec, and Leu-Tyr-Leu-|-Tyr-Trp, in which cleavage of the -Tyr-|-Leu- and -Tyr-|-Trp bonds also occurs).. Its function is as follows. Cleaves peptides in various proteins in a process that requires ATP hydrolysis. Has a chymotrypsin-like activity. Plays a major role in the degradation of misfolded proteins. The chain is ATP-dependent Clp protease proteolytic subunit 3 from Streptomyces coelicolor (strain ATCC BAA-471 / A3(2) / M145).